The primary structure comprises 719 residues: Probable disease resistance protein At4g14610 (719 aa).

Residues 25-73 are a coiled coil; it reads SLPENLAALQKAIEVLKTKHDDVKRRVDKEEFLGRRHRLSQVQVEIERL. One can recognise an NB-ARC domain in the interval 114–418; it reads EENLVAQVEE…NELEKILGCP (305 aa). 156-163 provides a ligand contact to ATP; sequence GMGGVGKT. 3 LRR repeats span residues 400-421, 422-444, and 447-469; these read AVRR…PTCP, QLTT…FFRF, and NLVV…ISEV.

This sequence belongs to the disease resistance NB-LRR family.

In terms of biological role, probable disease resistance protein. In Arabidopsis thaliana (Mouse-ear cress), this protein is Probable disease resistance protein At4g14610.